Consider the following 539-residue polypeptide: Carboxysome assembly protein CcmM (539 aa).

The tract at residues 1–214 (MPSPTTVPVA…PLRPSSSEAT (214 aa)) is carbonic anhydrase-like domain. Residues 194 to 213 (TADFHSTPTPSPLRPSSSEA) are disordered. A RbcS-like repeat 1, SSUL1 repeat occupies 226–397 (SSEVITQVRS…VLAELENCLS (172 aa)). 2 disulfides stabilise this stretch: Cys261-Cys279 and Cys377-Cys395. A RbcS-like repeat 2, SSUL2 repeat occupies 341-425 (LSAEVVNKVR…RVFEALIQDP (85 aa)). The disordered stretch occupies residues 427-459 (GPVGSAKAAAAPVSSATPSSHSYTSNGSSSSDV). Low complexity predominate over residues 431-457 (SAKAAAAPVSSATPSSHSYTSNGSSSS). One copy of the RbcS-like repeat 3, SSUL3 repeat lies at 453 to 539 (GSSSSDVAGQ…RVAELLIQKP (87 aa)).

This sequence belongs to the gamma-class carbonic anhydrase family. In terms of assembly, probably a homotrimer. Purifies from carboxysomes in complex with both RuBisCO subunits and carbonic anhydrase (ccaA); the complex is probably associated with the carboxysome shell. Interacts with CcmN. Binds holo-RuBisCO (RbcL(8)-RbcS(8)) via its SSUL domains; the SSUL domain binds close to the equitorial domain of RuBisCO between RbcL dimers, with 1 M35 protein per dimer. The short form purifies from carboxysomes in complex with both RuBisCO subunits; the complex is probably associated with the carboxysome shell. Post-translationally, identified as 2 proteins of 58 and 38 kDa by mass spectrometry, called M58 and M35, the shorter protein is translated starting at Val-216. Protease inhibitors do not alter the appearance of M35. In isolated carboxysomes M35 is 4-5 fold more abundant. The first amino acid (equivalent to Val-216) is not seen in Edman degradation, while Tyr-219 and Gln-222 may be post-translationally modified.

The protein localises to the carboxysome. Its function is as follows. Functions as a scaffold protein for the assembly of beta-carboxysomes, initiates carboxysome assembly by coalescing RuBisCO (ribulose bisphosphate carboxylase, rbcL-rbcS). Produced as a full-length (M58) and a shorter form (M35); both forms are required for correct carboxysome assembly and growth. The short form is more abundant. Despite its strong similarity to gamma-class carbonic anhydrase (CA) it does not have detectable CA activity. In terms of biological role, the M35 isoform is able to condense RuBisCO into a liquid matrix; the presence of disulfide bonds in M35 reduces affinity for RuBisCO, while mutating all 4 Cys to Ser causes a 4-fold increase in doubling time, more than 15% increase in CO(2) requirement, and abnormal carboxysomes. Functionally, beta-carboxysome assembly initiates when soluble RuBisCO is condensed into a liquid matrix in a pre-carboxysome by the RbcS-like domains of probably both CcmM58 and CcmM35. CcmN interacts with the N-terminus of CcmM58, and then recruits the CcmK2 major shell protein plus other less abundant CcmK proteins via CcmN's encapsulation peptide. Shell formation requires CcmK proteins and CcmO. CcmL caps the otherwise elongated carboxysome. Once fully encapsulated carboxysomes are formed, they migrate within the cell probably via interactions with the cytoskeleton. This chain is Carboxysome assembly protein CcmM, found in Synechococcus elongatus (strain ATCC 33912 / PCC 7942 / FACHB-805) (Anacystis nidulans R2).